An 823-amino-acid chain; its full sequence is Probable inorganic carbon transporter subunit DabA (823 aa).

Zn(2+) is bound by residues Cys-361, Asp-363, His-527, and Cys-542.

It belongs to the inorganic carbon transporter (TC 9.A.2) DabA family. In terms of assembly, forms a complex with DabB. Zn(2+) is required as a cofactor.

The protein localises to the cell inner membrane. With respect to regulation, intracellular DIC accumulation is sensitive to CCCP (carbonyl cyanide-m-chlorophenylhydrazone) and DCCD (N,N-dicyclohexylcarbodiimide) and therefore likely driven by either proton potential, ATP, or both. In terms of biological role, part of an energy-coupled inorganic carbon pump. Functionally, probably involved in transport of dissolved inorganic carbon (DIC) with upstream gene dabB (Tcr_0853); has been suggested to be a proton-DIC symporter. The protein is Probable inorganic carbon transporter subunit DabA of Hydrogenovibrio crunogenus (strain DSM 25203 / XCL-2) (Thiomicrospira crunogena).